The chain runs to 283 residues: MCVIFFCADSNPQPGGYKLILASNRDEFFARATLSAAKWANADHVYGGIDLEPGREGGTWLAIGHSAGFFKVGALLNLTGEPKPRDAVGRGMIVADYVTRADEEHSILNYNERLLKDCTKYSAFNFVSIEIGSASQPARVKLLSNVPPTLEDFQNGECYGFGNSLPHSPFEKVRHGKQEFEAIVKAHGEASVETLSAQLMQLLRNKHKFWPDDELKTRAPNWGEGLSSLNVHIEEHAYGSRTHSVVLVDSENKMHFIEETMTGLDPHGEWNKTHIEKDFQNGV.

This sequence belongs to the Tango2 family.

The protein resides in the cytoplasm. It localises to the mitochondrion. The protein localises to the golgi apparatus. May play a role in Golgi organization. The protein is Transport and Golgi organization protein 2 (Tango2) of Drosophila melanogaster (Fruit fly).